An 898-amino-acid chain; its full sequence is Chloride channel protein 2 (898 aa).

Alanine 2 is modified (N-acetylalanine). Topologically, residues 2–87 (AAAAAEEGME…RCHKFLVSRV (86 aa)) are cytoplasmic. Residues 16–34 (QYEQTLMYGRYTQDLGAFA) form an essential for channel gating by both voltage and cell volume region. Threonine 20 carries the post-translational modification Phosphothreonine. A modulates channel gating by both voltage and cell volume region spans residues 36–49 (EEAARIRLGGPEPW). Helical transmembrane passes span 88-121 (GEDW…AQQW) and 130-155 (ILLQ…TQIL). A Selectivity filter part_1 motif is present at residues 161–165 (GSGIP). A chloride-binding site is contributed by serine 162. The helical intramembrane region spans 164 to 171 (IPEMKTIL). The next 2 helical transmembrane spans lie at 180 to 198 (LTLK…ALGS) and 205 to 223 (EGPF…SKFL). Residues 203-207 (GKEGP) carry the Selectivity filter part_2 motif. Intramembrane regions (helical) lie at residues 239 to 251 (MLAA…VGCC) and 255 to 263 (PIGGVLFSI). 5 consecutive transmembrane segments (helical) span residues 275 to 295 (YWRG…LAVW), 321 to 349 (LPAF…VQVM), 358 to 377 (FLMR…ISTL), 429 to 449 (ANVF…SALA), and 457 to 480 (GAFM…MAAW). The Selectivity filter part_3 motif lies at 457-461 (GAFMP). Residue phenylalanine 459 coordinates chloride. The segment at residues 497 to 511 (GGYAVVGAAALAGAV) is an intramembrane region (helical). An intramembrane region (note=Loop between two helices) is located at residues 512 to 513 (TH). Residues 514-525 (TVSTAVIVFELT) constitute an intramembrane region (helical). The segment at residues 526–530 (GQIAH) is an intramembrane region (note=Loop between two helices). A helical transmembrane segment spans residues 531 to 548 (ILPVMIAVILANAVAQSL). Residues 549–898 (QPSLYDSIIR…SPSDSDDKCQ (350 aa)) lie on the Cytoplasmic side of the membrane. Position 553 (tyrosine 553) interacts with chloride. The CBS 1 domain occupies 584 to 642 (MVRDVPHVALSCTFRDLRLALHRTKGRMLALVESPESMILLGSIERSQVVALLGAQLSP). 2 disordered regions span residues 643 to 672 (ARRR…PEAS) and 686 to 717 (AARG…TGSA). Positions 705–717 (VTRNLGESPTGSA) are enriched in polar residues. A phosphoserine mark is found at serine 712 and serine 758. Residues 790–850 (IDPAPFQLVE…GSVTAQGVKV (61 aa)) form the CBS 2 domain. The short motif at 812–813 (LL) is the Basolateral membrane sorting element. Residues 856-898 (SFRDSATSSSDTETTEVHALWGPHSRHGLPREGSPSDSDDKCQ) are disordered.

It belongs to the chloride channel (TC 2.A.49) family. ClC-2/CLCN2 subfamily. As to quaternary structure, homodimer. Interacts with auxiliary subunit HEPACAM. Post-translationally, phosphorylated. Activated by dephosphorylation. Ubiquitously expressed. Moderately expressed in aortic and coronary vascular smooth muscle cells and expressed at a low level in aortic endothelial cells. Expressed in the adrenal gland, predominantly in the zona glomerulosa. Expressed in white mater perivascular astrocytes and ependymal cells (at protein level).

The protein resides in the cell membrane. It localises to the basolateral cell membrane. It is found in the cell projection. Its subcellular location is the dendritic spine membrane. The protein localises to the axon. The catalysed reaction is chloride(in) = chloride(out). It catalyses the reaction thiocyanate(in) = thiocyanate(out). The enzyme catalyses bromide(in) = bromide(out). It carries out the reaction nitrate(in) = nitrate(out). The catalysed reaction is iodide(out) = iodide(in). With respect to regulation, common gate kinetics are down-regulated by intracellular ATP. Inhibited by AK-42, a derivative of meclofenamate. Inhibited by Cd(2+). Inhibited by Zn(2+) and PKC activation. Inhibited at acidic pH. CCLN2:HEPACAM channel conductance is up-regulated upon hypo-osmolarity. Voltage-gated and osmosensitive chloride channel. Forms a homodimeric channel where each subunit has its own ion conduction pathway. Conducts double-barreled currents controlled by two types of gates, two fast glutamate gates that control each subunit independently and a slow common gate that opens and shuts off both subunits simultaneously. Displays inward rectification currents activated upon membrane hyperpolarization and extracellular hypotonicity. Contributes to chloride conductance involved in neuron excitability. In hippocampal neurons, generates a significant part of resting membrane conductance and provides an additional chloride efflux pathway to prevent chloride accumulation in dendrites upon GABA receptor activation. In glia, associates with the auxiliary subunit HEPACAM/GlialCAM at astrocytic processes and myelinated fiber tracts where it may regulate transcellular chloride flux buffering extracellular chloride and potassium concentrations. Regulates aldosterone production in adrenal glands. The opening of CLCN2 channels at hyperpolarized membrane potentials in the glomerulosa causes cell membrane depolarization, activation of voltage-gated calcium channels and increased expression of aldosterone synthase, the rate-limiting enzyme for aldosterone biosynthesis. Contributes to chloride conductance in retinal pigment epithelium involved in phagocytosis of shed photoreceptor outer segments and photoreceptor renewal. Conducts chloride currents at the basolateral membrane of epithelial cells with a role in chloride reabsorption rather than secretion. Permeable to small monovalent anions with chloride &gt; thiocyanate &gt; bromide &gt; nitrate &gt; iodide ion selectivity. This Homo sapiens (Human) protein is Chloride channel protein 2.